Reading from the N-terminus, the 273-residue chain is DnaJ homolog subfamily C member 27 (273 aa).

Residues 1 to 18 form a required for interaction with MAPK1 region; it reads METNVPKRKEPAKSLRIK. Residues 23–30, 71–75, and 134–137 each bind GTP; these read GNAEVGKS, DMAGH, and NKID. In terms of domain architecture, J spans 217–273; it reads DSWEMLGVRPGASREEVNKAYRKLAVLLHPDKCVAPGSEDAFKAVVNARTALLKNIK.

It belongs to the small GTPase superfamily. Rab family. Interacts directly with MAPK1 (wild-type and kinase-deficient forms). Interacts directly (in GTP-bound form) with MAP2K1 (wild-type and kinase-deficient forms).

The protein resides in the nucleus. GTPase which can activate the MEK/ERK pathway and induce cell transformation when overexpressed. May act as a nuclear scaffold for MAPK1, probably by association with MAPK1 nuclear export signal leading to enhanced ERK1/ERK2 signaling. This is DnaJ homolog subfamily C member 27 (Dnajc27) from Mus musculus (Mouse).